Here is a 571-residue protein sequence, read N- to C-terminus: MRTSKYLLSTLKETPNDAQVVSHQLMLRAGMIRPLASGLYNWLPTGLRVLKKVENIVREEMNKSGAIEVEMPVVQPAELWQESQRWEQYGPELLRFVDRGNRDFVLGPTHEEVITDLVHREVSSYKQLPLNLYQIQTKFRDEVRPRFGVMRGREFLMKDAYSFHTSKECLQNTYDVMYRTYNNIFTRLGLDFRAVQADTGSIGGSASHEFQVLAKSGEDDIVFSSNSDYAANIELAEAVAIGQRQAPSATMELVDTPNAKTINDLVEQFNLSVEKTVKTLIVKGANEDQPLIALIVRGDHELNEVKAQKLPEVADPLEFANEDEIKTKIGAGIGSLGPVNLPIPAIIDRSVALMSDFSTGANIDGKHYFNVNWDRDVALPKVADLRNVVEGDPSPDGKGTLQIKRGIEVGHIFQLGTKYSEAMKATVQGEDGRPQTMIMGCYGIGVSRVVAATIEQCHDEKGIIWSSDEIAPFTVAIIPMNMYKSKNVQIFAEELYQSLLNKNVDVIFDDRKERPGVMFADIELIGVPHMIVIGEKNLEKGEIEYKNRRTGEKQIIAKEQVLDFLAQRVNA.

The protein belongs to the class-II aminoacyl-tRNA synthetase family. ProS type 1 subfamily. As to quaternary structure, homodimer.

It is found in the cytoplasm. The catalysed reaction is tRNA(Pro) + L-proline + ATP = L-prolyl-tRNA(Pro) + AMP + diphosphate. Functionally, catalyzes the attachment of proline to tRNA(Pro) in a two-step reaction: proline is first activated by ATP to form Pro-AMP and then transferred to the acceptor end of tRNA(Pro). As ProRS can inadvertently accommodate and process non-cognate amino acids such as alanine and cysteine, to avoid such errors it has two additional distinct editing activities against alanine. One activity is designated as 'pretransfer' editing and involves the tRNA(Pro)-independent hydrolysis of activated Ala-AMP. The other activity is designated 'posttransfer' editing and involves deacylation of mischarged Ala-tRNA(Pro). The misacylated Cys-tRNA(Pro) is not edited by ProRS. This Histophilus somni (strain 2336) (Haemophilus somnus) protein is Proline--tRNA ligase.